The sequence spans 351 residues: Foldase protein PrsA 1 (351 aa).

The signal sequence occupies residues 1–22 (MKNSNKLIASVVTLASVMALAA). Residue C23 is the site of N-palmitoyl cysteine attachment. Residue C23 is the site of S-diacylglycerol cysteine attachment. Residues 145–240 (TPTMAVEMIT…KKFYIVKVTK (96 aa)) form the PpiC domain. Composition is skewed to low complexity over residues 303–317 (KTKA…SESS) and 326–351 (ESEQ…PAAQ). Residues 303–351 (KTKAASESSTTSESSKAAEENPSESEQTQTSSAEEPTETEAQTQEPAAQ) are disordered.

It belongs to the PrsA family.

The protein resides in the cell membrane. It catalyses the reaction [protein]-peptidylproline (omega=180) = [protein]-peptidylproline (omega=0). Its function is as follows. Plays a major role in protein secretion by helping the post-translocational extracellular folding of several secreted proteins. The protein is Foldase protein PrsA 1 (prsA1) of Streptococcus pyogenes serotype M18 (strain MGAS8232).